Reading from the N-terminus, the 624-residue chain is APC membrane recruitment protein 2 (624 aa).

Disordered regions lie at residues 77-111, 126-177, 195-230, 342-369, and 397-588; these read EEPC…SVAK, ENVK…GLIL, PLCE…PLNG, ADQD…SKKN, and FSMI…ELPR. The segment covering 102-111 has biased composition (low complexity); the sequence is DVSSDSSVAK. 2 stretches are compositionally biased toward basic and acidic residues: residues 155–168 and 195–204; these read SKKD…KEGA and PLCEKEKSEE. The span at 352 to 363 shows a compositional bias: low complexity; that stretch reads KGSKVVPGNGKK. Basic and acidic residues-rich tracts occupy residues 422–435 and 450–469; these read REVK…DRNT and ERGD…RNSD.

The protein belongs to the Amer family.

It is found in the cell membrane. Functionally, negative regulator of the canonical Wnt signaling pathway involved in neuroectodermal patterning. Acts by specifically binding phosphatidylinositol 4,5-bisphosphate (PtdIns(4,5)P2), translocating to the cell membrane and interacting with key regulators of the canonical Wnt signaling pathway, such as components of the beta-catenin destruction complex. In Xenopus laevis (African clawed frog), this protein is APC membrane recruitment protein 2 (amer2).